The chain runs to 86 residues: MRSATLLLVSCVLLSFILGNVKEVEAVLKPMDQCGRKDIFLGGCGSNGSKTCINDFVKKGGVAAKPSSCECDDFGEEHLCRCYVPC.

The N-terminal stretch at 1–26 (MRSATLLLVSCVLLSFILGNVKEVEA) is a signal peptide. 4 disulfides stabilise this stretch: Cys34–Cys86, Cys44–Cys71, Cys52–Cys80, and Cys69–Cys82.

It belongs to the DEFL family.

The protein localises to the secreted. In Arabidopsis thaliana (Mouse-ear cress), this protein is Putative defensin-like protein 234 (SCRL14).